The primary structure comprises 464 residues: Serine/threonine-protein kinase 38-like (464 aa).

Ala2 is subject to N-acetylalanine. The interval 64–89 is S100B binding; the sequence is KLRRSQHARKETEFLRLKRTRLGLDD. At Thr75 the chain carries Phosphothreonine. One can recognise a Protein kinase domain in the interval 90–383; that stretch reads FESLKVIGRG…VEEIKGHPFF (294 aa). ATP contacts are provided by residues 96–104 and Lys119; that span reads IGRGAFGEV. The Proton acceptor role is filled by Asp213. Ser282 bears the Phosphoserine; by autocatalysis mark. In terms of domain architecture, AGC-kinase C-terminal spans 384–453; sequence EGVDWGHIRE…KRFEGLTQRG (70 aa). Thr442 carries the phosphothreonine; by STK24/MST3 modification.

This sequence belongs to the protein kinase superfamily. AGC Ser/Thr protein kinase family. In terms of assembly, homodimeric S100B binds two molecules of STK38L. Interacts with MOB1 and MOB2. Interacts with MICAL1; leading to inhibit the protein kinase activity by antagonizing activation by MST1/STK4. Requires Mg(2+) as cofactor. Highly expressed in the large and small intestine, stomach and testis. High levels also present in the brain, in particular the neurocortex, basal forebrain, hippocampus, the amygdala, cerebellum and brainstem.

It localises to the cytoplasm. It is found in the cytoskeleton. The protein resides in the membrane. The enzyme catalyses L-seryl-[protein] + ATP = O-phospho-L-seryl-[protein] + ADP + H(+). The catalysed reaction is L-threonyl-[protein] + ATP = O-phospho-L-threonyl-[protein] + ADP + H(+). Activated by binding of S100B which releases autoinhibitory N-lobe interactions, enabling ATP to bind and the autophosphorylation of Ser-282. Thr-442 then undergoes calcium-dependent phosphorylation by STK24/MST3. Interactions between phosphorylated Thr-442 and the N-lobe promote additional structural changes that complete the activation of the kinase. Autoinhibition is also released by the binding of MOB1/MOBKL1A and MOB2 to the N-terminal of STK38L. Functionally, involved in the regulation of structural processes in differentiating and mature neuronal cells. The sequence is that of Serine/threonine-protein kinase 38-like from Mus musculus (Mouse).